We begin with the raw amino-acid sequence, 223 residues long: Ubiquitin-conjugating enzyme E2 S (223 aa).

Position 1 is an N-acetylmethionine (M1). In terms of domain architecture, UBC core spans 11–157 (HIIRLVYKEV…ARLLTEIHGG (147 aa)). The active-site Glycyl thioester intermediate is C95. The tract at residues 155–223 (HGGAGGPSGG…TDKKRALRRL (69 aa)) is disordered. Low complexity predominate over residues 169–195 (GRATASGAAASTADPTAPGGPAGAEGP). The residue at position 174 (S174) is a Phosphoserine. The segment covering 209-223 (AAKKKTDKKRALRRL) has biased composition (basic residues).

The protein belongs to the ubiquitin-conjugating enzyme family. As to quaternary structure, component of the APC/C complex, composed of at least 14 distinct subunits that assemble into a complex of at least 19 chains with a combined molecular mass of around 1.2 MDa. Within this complex, directly interacts with ANAPC2 and ANAPC4. Interacts with CDC20, FZR1/CDH1 and VHL. Autoubiquitinated by the APC/C complex during G1, leading to its degradation by the proteasome.

The enzyme catalyses S-ubiquitinyl-[E1 ubiquitin-activating enzyme]-L-cysteine + [E2 ubiquitin-conjugating enzyme]-L-cysteine = [E1 ubiquitin-activating enzyme]-L-cysteine + S-ubiquitinyl-[E2 ubiquitin-conjugating enzyme]-L-cysteine.. Its pathway is protein modification; protein ubiquitination. Accepts ubiquitin from the E1 complex and catalyzes its covalent attachment to other proteins. Catalyzes 'Lys-11'-linked polyubiquitination. Acts as an essential factor of the anaphase promoting complex/cyclosome (APC/C), a cell cycle-regulated ubiquitin ligase that controls progression through mitosis. Acts by specifically elongating 'Lys-11'-linked polyubiquitin chains initiated by the E2 enzyme UBE2C/UBCH10 on APC/C substrates, enhancing the degradation of APC/C substrates by the proteasome and promoting mitotic exit. Also acts by elongating ubiquitin chains initiated by the E2 enzyme UBE2D1/UBCH5 in vitro; it is however unclear whether UBE2D1/UBCH5 acts as an E2 enzyme for the APC/C in vivo. Also involved in ubiquitination and subsequent degradation of VHL, resulting in an accumulation of HIF1A. In vitro able to promote polyubiquitination using all 7 ubiquitin Lys residues, except 'Lys-48'-linked polyubiquitination. This Bos taurus (Bovine) protein is Ubiquitin-conjugating enzyme E2 S (UBE2S).